The following is a 232-amino-acid chain: 2,3-bisphosphoglycerate-dependent phosphoglycerate mutase 1 (232 aa).

Residues 8 to 15 (RHGQSLWN), 21 to 22 (TG), R58, 114 to 117 (ERYY), K125, 141 to 142 (RR), and 185 to 186 (GN) each bind substrate. H9 (tele-phosphohistidine intermediate) is an active-site residue. E114 serves as the catalytic Proton donor/acceptor.

Belongs to the phosphoglycerate mutase family. BPG-dependent PGAM subfamily.

The enzyme catalyses (2R)-2-phosphoglycerate = (2R)-3-phosphoglycerate. It functions in the pathway carbohydrate degradation; glycolysis; pyruvate from D-glyceraldehyde 3-phosphate: step 3/5. Functionally, catalyzes the interconversion of 2-phosphoglycerate and 3-phosphoglycerate. This chain is 2,3-bisphosphoglycerate-dependent phosphoglycerate mutase 1, found in Gloeobacter violaceus (strain ATCC 29082 / PCC 7421).